We begin with the raw amino-acid sequence, 380 residues long: Cytochrome b (380 aa).

Transmembrane regions (helical) follow at residues 34–54 (FGSL…LLAM), 78–99 (WLIR…YMHI), 114–134 (WNTG…GYVL), and 179–199 (FFAL…IHLT). Residues His-84 and His-98 each contribute to the heme b site. 2 residues coordinate heme b: His-183 and His-197. His-202 contacts a ubiquinone. 4 helical membrane passes run 227–247 (SKDI…ALFS), 289–309 (LGGV…PFLH), 321–341 (LSQM…WIGS), and 348–368 (FIII…ILLP).

The protein belongs to the cytochrome b family. As to quaternary structure, the cytochrome bc1 complex contains 11 subunits: 3 respiratory subunits (MT-CYB, CYC1 and UQCRFS1), 2 core proteins (UQCRC1 and UQCRC2) and 6 low-molecular weight proteins (UQCRH/QCR6, UQCRB/QCR7, UQCRQ/QCR8, UQCR10/QCR9, UQCR11/QCR10 and a cleavage product of UQCRFS1). This cytochrome bc1 complex then forms a dimer. It depends on heme b as a cofactor.

It is found in the mitochondrion inner membrane. In terms of biological role, component of the ubiquinol-cytochrome c reductase complex (complex III or cytochrome b-c1 complex) that is part of the mitochondrial respiratory chain. The b-c1 complex mediates electron transfer from ubiquinol to cytochrome c. Contributes to the generation of a proton gradient across the mitochondrial membrane that is then used for ATP synthesis. The polypeptide is Cytochrome b (MT-CYB) (Caracara plancus (Southern caracara)).